The primary structure comprises 571 residues: Proline--tRNA ligase (571 aa).

It belongs to the class-II aminoacyl-tRNA synthetase family. ProS type 1 subfamily. As to quaternary structure, homodimer.

The protein localises to the cytoplasm. It catalyses the reaction tRNA(Pro) + L-proline + ATP = L-prolyl-tRNA(Pro) + AMP + diphosphate. In terms of biological role, catalyzes the attachment of proline to tRNA(Pro) in a two-step reaction: proline is first activated by ATP to form Pro-AMP and then transferred to the acceptor end of tRNA(Pro). As ProRS can inadvertently accommodate and process non-cognate amino acids such as alanine and cysteine, to avoid such errors it has two additional distinct editing activities against alanine. One activity is designated as 'pretransfer' editing and involves the tRNA(Pro)-independent hydrolysis of activated Ala-AMP. The other activity is designated 'posttransfer' editing and involves deacylation of mischarged Ala-tRNA(Pro). The misacylated Cys-tRNA(Pro) is not edited by ProRS. The polypeptide is Proline--tRNA ligase (Stutzerimonas stutzeri (strain A1501) (Pseudomonas stutzeri)).